The chain runs to 181 residues: Ribonuclease HII (181 aa).

The RNase H type-2 domain occupies 1–181; that stretch reads MICGIDEVGR…SLHRRNFKLI (181 aa). The a divalent metal cation site is built by Asp-6, Glu-7, and Asp-98.

This sequence belongs to the RNase HII family. Mn(2+) is required as a cofactor. Mg(2+) serves as cofactor.

The protein resides in the cytoplasm. It catalyses the reaction Endonucleolytic cleavage to 5'-phosphomonoester.. Its function is as follows. Endonuclease that specifically degrades the RNA of RNA-DNA hybrids. The chain is Ribonuclease HII from Borrelia garinii subsp. bavariensis (strain ATCC BAA-2496 / DSM 23469 / PBi) (Borreliella bavariensis).